A 127-amino-acid chain; its full sequence is Fluoride-specific ion channel FluC (127 aa).

A run of 4 helical transmembrane segments spans residues 4-24 (LLLA…LLSM), 35-55 (LGTL…FAWF), 71-91 (TGFC…VFLL), and 103-123 (VFVN…LFSA). Na(+)-binding residues include Gly75 and Thr78.

The protein belongs to the fluoride channel Fluc/FEX (TC 1.A.43) family.

It is found in the cell inner membrane. It catalyses the reaction fluoride(in) = fluoride(out). Na(+) is not transported, but it plays an essential structural role and its presence is essential for fluoride channel function. Its function is as follows. Fluoride-specific ion channel. Important for reducing fluoride concentration in the cell, thus reducing its toxicity. This chain is Fluoride-specific ion channel FluC, found in Escherichia coli O17:K52:H18 (strain UMN026 / ExPEC).